The sequence spans 316 residues: Beta-ketoacyl-[acyl-carrier-protein] synthase III 1 (316 aa).

Residues Cys-112 and His-243 contribute to the active site. Residues 244-248 form an ACP-binding region; it reads QANYR. Asn-273 is an active-site residue.

It belongs to the thiolase-like superfamily. FabH family. In terms of assembly, homodimer.

The protein resides in the cytoplasm. It carries out the reaction malonyl-[ACP] + acetyl-CoA + H(+) = 3-oxobutanoyl-[ACP] + CO2 + CoA. Its pathway is lipid metabolism; fatty acid biosynthesis. Catalyzes the condensation reaction of fatty acid synthesis by the addition to an acyl acceptor of two carbons from malonyl-ACP. Catalyzes the first condensation reaction which initiates fatty acid synthesis and may therefore play a role in governing the total rate of fatty acid production. Possesses both acetoacetyl-ACP synthase and acetyl transacylase activities. Its substrate specificity determines the biosynthesis of branched-chain and/or straight-chain of fatty acids. The polypeptide is Beta-ketoacyl-[acyl-carrier-protein] synthase III 1 (Vibrio vulnificus (strain YJ016)).